A 325-amino-acid polypeptide reads, in one-letter code: Tetraacyldisaccharide 4'-kinase (325 aa).

55 to 62 provides a ligand contact to ATP; sequence TAGGNGKT.

The protein belongs to the LpxK family.

The catalysed reaction is a lipid A disaccharide + ATP = a lipid IVA + ADP + H(+). It participates in glycolipid biosynthesis; lipid IV(A) biosynthesis; lipid IV(A) from (3R)-3-hydroxytetradecanoyl-[acyl-carrier-protein] and UDP-N-acetyl-alpha-D-glucosamine: step 6/6. Transfers the gamma-phosphate of ATP to the 4'-position of a tetraacyldisaccharide 1-phosphate intermediate (termed DS-1-P) to form tetraacyldisaccharide 1,4'-bis-phosphate (lipid IVA). The chain is Tetraacyldisaccharide 4'-kinase from Salmonella newport (strain SL254).